A 73-amino-acid chain; its full sequence is UPF0435 protein Lm4b_01721 (73 aa).

It belongs to the UPF0435 family.

The polypeptide is UPF0435 protein Lm4b_01721 (Listeria monocytogenes serotype 4b (strain CLIP80459)).